The following is a 416-amino-acid chain: 4-hydroxy-3-methylbut-2-en-1-yl diphosphate synthase (flavodoxin) (416 aa).

4 residues coordinate [4Fe-4S] cluster: Cys304, Cys307, Cys350, and Glu357.

It belongs to the IspG family. The cofactor is [4Fe-4S] cluster.

The catalysed reaction is (2E)-4-hydroxy-3-methylbut-2-enyl diphosphate + oxidized [flavodoxin] + H2O + 2 H(+) = 2-C-methyl-D-erythritol 2,4-cyclic diphosphate + reduced [flavodoxin]. Its pathway is isoprenoid biosynthesis; isopentenyl diphosphate biosynthesis via DXP pathway; isopentenyl diphosphate from 1-deoxy-D-xylulose 5-phosphate: step 5/6. In terms of biological role, converts 2C-methyl-D-erythritol 2,4-cyclodiphosphate (ME-2,4cPP) into 1-hydroxy-2-methyl-2-(E)-butenyl 4-diphosphate. This chain is 4-hydroxy-3-methylbut-2-en-1-yl diphosphate synthase (flavodoxin), found in Burkholderia pseudomallei (strain K96243).